A 413-amino-acid chain; its full sequence is Probable isoleucine--tRNA ligase, mitochondrial (413 aa).

The 'KMSKS' region motif lies at 298-302; that stretch reads KMSKS. Position 301 (K301) interacts with ATP.

This sequence belongs to the class-I aminoacyl-tRNA synthetase family.

Its subcellular location is the mitochondrion matrix. It catalyses the reaction tRNA(Ile) + L-isoleucine + ATP = L-isoleucyl-tRNA(Ile) + AMP + diphosphate. The protein is Probable isoleucine--tRNA ligase, mitochondrial of Ciona intestinalis (Transparent sea squirt).